The sequence spans 473 residues: Serine palmitoyltransferase 1 (473 aa).

Over Met1–Gln15 the chain is Lumenal. The interaction with SPTLC2 stretch occupies residues Met1–Pro66. Residues Ala16–Ile36 traverse the membrane as a helical segment. Topologically, residues Arg37–Leu473 are cytoplasmic. Tyr164 carries the post-translational modification Phosphotyrosine; by ABL.

Belongs to the class-II pyridoxal-phosphate-dependent aminotransferase family. In terms of assembly, component of the serine palmitoyltransferase (SPT) complex, which is also composed of SPTLC2 or SPTLC3 and SPTSSA or SPTSSB. The heterodimer with SPTLC2 or SPTLC3 forms the catalytic core of the enzyme, while SPTSSA or SPTSSB subunits determine substrate specificity. SPT also interacts with ORMDL proteins, especially ORMDL3, which negatively regulate SPT activity in the presence of ceramides. Forms dimers of heterodimers with SPTLC2. Interacts with RTN4 (isoform B). The cofactor is pyridoxal 5'-phosphate. In terms of processing, phosphorylation at Tyr-164 inhibits activity and promotes cell survival. As to expression, expressed in astrocytes.

The protein resides in the endoplasmic reticulum membrane. The enzyme catalyses L-serine + hexadecanoyl-CoA + H(+) = 3-oxosphinganine + CO2 + CoA. It catalyses the reaction octadecanoyl-CoA + L-serine + H(+) = 3-oxoeicosasphinganine + CO2 + CoA. The catalysed reaction is tetradecanoyl-CoA + L-serine + H(+) = 3-oxohexadecasphinganine + CO2 + CoA. It carries out the reaction dodecanoyl-CoA + L-serine + H(+) = 3-oxotetradecasphinganine + CO2 + CoA. Its pathway is lipid metabolism; sphingolipid metabolism. Its activity is regulated as follows. SPT complex catalytic activity is negatively regulated by ORMDL proteins, including ORMDL3, in the presence of ceramides. This mechanism allows to maintain ceramide levels at sufficient concentrations for the production of complex sphingolipids, but which prevents the accumulation of ceramides to levels that trigger apoptosis. In terms of biological role, component of the serine palmitoyltransferase multisubunit enzyme (SPT) that catalyzes the initial and rate-limiting step in sphingolipid biosynthesis by condensing L-serine and activated acyl-CoA (most commonly palmitoyl-CoA) to form long-chain bases. The SPT complex is also composed of SPTLC2 or SPTLC3 and SPTSSA or SPTSSB. Within this complex, the heterodimer with SPTLC2 or SPTLC3 forms the catalytic core. The composition of the serine palmitoyltransferase (SPT) complex determines the substrate preference. The SPTLC1-SPTLC2-SPTSSA complex shows a strong preference for C16-CoA substrate, while the SPTLC1-SPTLC3-SPTSSA isozyme uses both C14-CoA and C16-CoA as substrates, with a slight preference for C14-CoA. The SPTLC1-SPTLC2-SPTSSB complex shows a strong preference for C18-CoA substrate, while the SPTLC1-SPTLC3-SPTSSB isozyme displays an ability to use a broader range of acyl-CoAs, without apparent preference. Required for adipocyte cell viability and metabolic homeostasis. This Rattus norvegicus (Rat) protein is Serine palmitoyltransferase 1.